The chain runs to 431 residues: Glutamate-1-semialdehyde 2,1-aminomutase (431 aa).

Lys-269 carries the post-translational modification N6-(pyridoxal phosphate)lysine.

It belongs to the class-III pyridoxal-phosphate-dependent aminotransferase family. HemL subfamily. Homodimer. The cofactor is pyridoxal 5'-phosphate.

It is found in the cytoplasm. The catalysed reaction is (S)-4-amino-5-oxopentanoate = 5-aminolevulinate. The protein operates within porphyrin-containing compound metabolism; protoporphyrin-IX biosynthesis; 5-aminolevulinate from L-glutamyl-tRNA(Glu): step 2/2. Its pathway is porphyrin-containing compound metabolism; chlorophyll biosynthesis. This chain is Glutamate-1-semialdehyde 2,1-aminomutase, found in Chlorobaculum tepidum (strain ATCC 49652 / DSM 12025 / NBRC 103806 / TLS) (Chlorobium tepidum).